Consider the following 215-residue polypeptide: Adenylate kinase (215 aa).

10–15 (GSGKGT) is a binding site for ATP. Residues 30–59 (STGDLFRTNIENDTPLGKEIKQIVENGQLV) form an NMP region. AMP-binding positions include threonine 31, arginine 36, 57–59 (QLV), 85–88 (GFPR), and glutamine 92. Residues 121–158 (GRRICQSCCKIFNIYTLPTKEKEICDFCQGILYQRKDD) are LID. Position 122 (arginine 122) interacts with ATP. Positions 125 and 128 each coordinate Zn(2+). Position 131–132 (131–132 (IF)) interacts with ATP. Zn(2+) is bound by residues cysteine 145 and cysteine 148. AMP contacts are provided by arginine 155 and arginine 166. Residue lysine 194 participates in ATP binding.

It belongs to the adenylate kinase family. Monomer.

The protein localises to the cytoplasm. It catalyses the reaction AMP + ATP = 2 ADP. Its pathway is purine metabolism; AMP biosynthesis via salvage pathway; AMP from ADP: step 1/1. Functionally, catalyzes the reversible transfer of the terminal phosphate group between ATP and AMP. Plays an important role in cellular energy homeostasis and in adenine nucleotide metabolism. The chain is Adenylate kinase from Borrelia recurrentis (strain A1).